Reading from the N-terminus, the 383-residue chain is Thioredoxin reductase 2 (383 aa).

FAD-binding positions include 66–69 (SGPA), 87–88 (FE), 95–100 (IAPGGQ), Asn109, Val142, Cys200, Asp345, and 352–354 (RQA). A disulfide bond links Cys197 and Cys200.

The protein belongs to the class-II pyridine nucleotide-disulfide oxidoreductase family. As to quaternary structure, homodimer. The cofactor is FAD.

It localises to the cytoplasm. Its subcellular location is the mitochondrion matrix. It carries out the reaction [thioredoxin]-dithiol + NADP(+) = [thioredoxin]-disulfide + NADPH + H(+). Functionally, possesses thioredoxin-disulfide reductase activity towards thioredoxins O1, O2 and F3. This chain is Thioredoxin reductase 2 (NTR2), found in Arabidopsis thaliana (Mouse-ear cress).